Here is a 487-residue protein sequence, read N- to C-terminus: Glutamyl-tRNA(Gln) amidotransferase subunit A (487 aa).

Lys78 serves as the catalytic Charge relay system. The segment covering 135–144 (SAYQTTTNPW) has biased composition (polar residues). The disordered stretch occupies residues 135–155 (SAYQTTTNPWDASRVPGGSSG). Ser153 serves as the catalytic Charge relay system. Ser177 serves as the catalytic Acyl-ester intermediate.

This sequence belongs to the amidase family. GatA subfamily. As to quaternary structure, heterotrimer of A, B and C subunits.

The catalysed reaction is L-glutamyl-tRNA(Gln) + L-glutamine + ATP + H2O = L-glutaminyl-tRNA(Gln) + L-glutamate + ADP + phosphate + H(+). In terms of biological role, allows the formation of correctly charged Gln-tRNA(Gln) through the transamidation of misacylated Glu-tRNA(Gln) in organisms which lack glutaminyl-tRNA synthetase. The reaction takes place in the presence of glutamine and ATP through an activated gamma-phospho-Glu-tRNA(Gln). The polypeptide is Glutamyl-tRNA(Gln) amidotransferase subunit A (Maridesulfovibrio salexigens (strain ATCC 14822 / DSM 2638 / NCIMB 8403 / VKM B-1763) (Desulfovibrio salexigens)).